The sequence spans 225 residues: Deoxyribose-phosphate aldolase (225 aa).

Catalysis depends on D94, which acts as the Proton donor/acceptor. K158 (schiff-base intermediate with acetaldehyde) is an active-site residue. The active-site Proton donor/acceptor is K187.

Belongs to the DeoC/FbaB aldolase family. DeoC type 1 subfamily.

The protein localises to the cytoplasm. It carries out the reaction 2-deoxy-D-ribose 5-phosphate = D-glyceraldehyde 3-phosphate + acetaldehyde. The protein operates within carbohydrate degradation; 2-deoxy-D-ribose 1-phosphate degradation; D-glyceraldehyde 3-phosphate and acetaldehyde from 2-deoxy-alpha-D-ribose 1-phosphate: step 2/2. In terms of biological role, catalyzes a reversible aldol reaction between acetaldehyde and D-glyceraldehyde 3-phosphate to generate 2-deoxy-D-ribose 5-phosphate. In Thermococcus gammatolerans (strain DSM 15229 / JCM 11827 / EJ3), this protein is Deoxyribose-phosphate aldolase.